We begin with the raw amino-acid sequence, 414 residues long: BICD family-like cargo adapter 2 (414 aa).

Positions Gly-34–Thr-341 form a coiled coil. Positions Gln-372–Gly-384 are enriched in basic and acidic residues. The disordered stretch occupies residues Gln-372–Gly-399.

The chain is BICD family-like cargo adapter 2 (bicdl2) from Danio rerio (Zebrafish).